Here is a 216-residue protein sequence, read N- to C-terminus: Sarcospan (216 aa).

Over 1–26 (MGRKPSPRAQELPEEEARTCCGCRFP) the chain is Cytoplasmic. A helical membrane pass occupies residues 27 to 47 (LLLALLQLALGIAVTVLGFLM). Residues 48–59 (ASISPSLLVRDT) lie on the Extracellular side of the membrane. The chain crosses the membrane as a helical span at residues 60 to 80 (PFWAGSIVCVVAYLGLFMLCV). Topologically, residues 81–95 (SYQVDERTCVQFSMK) are cytoplasmic. The helical transmembrane segment at 96–116 (VFYFLLSALGLMVCMLAVAFA) threads the bilayer. Topologically, residues 117-166 (AHHYSLLAQFTCETSLDSCQCKLPSSEPLSRAFVYRDVTDCTSVTGTFKL) are extracellular. The helical transmembrane segment at 167 to 187 (FLIIQMVLNLVCGLVCLLACF) threads the bilayer. Residues 188 to 216 (VMWKHRYQVFYVGVGLRSLMASDGQLPKA) are Cytoplasmic-facing.

It localises to the cell membrane. It is found in the sarcolemma. Its subcellular location is the postsynaptic cell membrane. Its function is as follows. Component of the dystrophin-glycoprotein complex (DGC), a complex that spans the muscle plasma membrane and forms a link between the F-actin cytoskeleton and the extracellular matrix. Preferentially associates with the sarcoglycan subcomplex of the DGC. The chain is Sarcospan (Sspn) from Mus musculus (Mouse).